Reading from the N-terminus, the 246-residue chain is Octanoyltransferase (246 aa).

A BPL/LPL catalytic domain is found at D54 to I240. Substrate-binding positions include R96–H103, A163–G165, and G176–A178. Catalysis depends on C194, which acts as the Acyl-thioester intermediate.

It belongs to the LipB family.

The protein localises to the cytoplasm. The catalysed reaction is octanoyl-[ACP] + L-lysyl-[protein] = N(6)-octanoyl-L-lysyl-[protein] + holo-[ACP] + H(+). It participates in protein modification; protein lipoylation via endogenous pathway; protein N(6)-(lipoyl)lysine from octanoyl-[acyl-carrier-protein]: step 1/2. Its function is as follows. Catalyzes the transfer of endogenously produced octanoic acid from octanoyl-acyl-carrier-protein onto the lipoyl domains of lipoate-dependent enzymes. Lipoyl-ACP can also act as a substrate although octanoyl-ACP is likely to be the physiological substrate. In Synechococcus sp. (strain WH7803), this protein is Octanoyltransferase.